The primary structure comprises 125 residues: Somatostatin-2 (125 aa).

Residues 1–24 form the signal peptide; it reads MQCIRCPAILALLALVLCGPSVSS. Gln25 is subject to Pyrrolidone carboxylic acid. Residues 25 to 97 constitute a propeptide that is removed on maturation; sequence QLDREQSDNQ…ATGGRMNLER (73 aa). The tract at residues 82–107 is disordered; it reads AEDASMATGGRMNLERSVDSTNNLPP. Cysteines 114 and 125 form a disulfide. Lys120 is modified (5-hydroxylysine).

The protein belongs to the somatostatin family.

It is found in the secreted. Functionally, somatostatin inhibits the release of somatotropin. In Lophius americanus (American angler), this protein is Somatostatin-2 (sst2).